The chain runs to 308 residues: MMPPVRGTLTQGRSLADLTWLRVGGPADWLFQPADEADLVQFLGALDPAVPVFPMGVGSNLIVRDGGLRAVVIRLGRGFNAIRIEGDRVIAGAAALDAHVARHAADAGRDLTFLRTIPGSIGGAVRMNAGCYGSYVADHLIEVRAVTREGRPVTLPAAELGLAYRQSALPEGCVLTEATFRAEAGDPAALARRMDEQIARRDSSQPTKERSAGSTFRNPAGFSSTGRADDTHELKAWKLIDEAGLRGARRGGAQMSEMHSNFLINAGGATAADLEGLGEEVIKRVFQSSGIRLEWEIMRVGELPVNKE.

In terms of domain architecture, FAD-binding PCMH-type spans 22 to 185; sequence RVGGPADWLF…TEATFRAEAG (164 aa). The active site involves arginine 165. Basic and acidic residues predominate over residues 197 to 211; that stretch reads QIARRDSSQPTKERS. Residues 197 to 228 are disordered; the sequence is QIARRDSSQPTKERSAGSTFRNPAGFSSTGRA. The segment covering 212-226 has biased composition (polar residues); the sequence is AGSTFRNPAGFSSTG. Catalysis depends on serine 214, which acts as the Proton donor. Glutamate 296 is an active-site residue.

This sequence belongs to the MurB family. It depends on FAD as a cofactor.

The protein localises to the cytoplasm. The catalysed reaction is UDP-N-acetyl-alpha-D-muramate + NADP(+) = UDP-N-acetyl-3-O-(1-carboxyvinyl)-alpha-D-glucosamine + NADPH + H(+). The protein operates within cell wall biogenesis; peptidoglycan biosynthesis. Its function is as follows. Cell wall formation. This is UDP-N-acetylenolpyruvoylglucosamine reductase from Cereibacter sphaeroides (strain ATCC 17023 / DSM 158 / JCM 6121 / CCUG 31486 / LMG 2827 / NBRC 12203 / NCIMB 8253 / ATH 2.4.1.) (Rhodobacter sphaeroides).